The following is a 375-amino-acid chain: Succinyl-diaminopimelate desuccinylase (375 aa).

Residue His-66 participates in Zn(2+) binding. Asp-68 is an active-site residue. Asp-99 serves as a coordination point for Zn(2+). Glu-133 (proton acceptor) is an active-site residue. 3 residues coordinate Zn(2+): Glu-134, Glu-162, and His-348.

This sequence belongs to the peptidase M20A family. DapE subfamily. Homodimer. It depends on Zn(2+) as a cofactor. The cofactor is Co(2+).

The catalysed reaction is N-succinyl-(2S,6S)-2,6-diaminopimelate + H2O = (2S,6S)-2,6-diaminopimelate + succinate. It functions in the pathway amino-acid biosynthesis; L-lysine biosynthesis via DAP pathway; LL-2,6-diaminopimelate from (S)-tetrahydrodipicolinate (succinylase route): step 3/3. Catalyzes the hydrolysis of N-succinyl-L,L-diaminopimelic acid (SDAP), forming succinate and LL-2,6-diaminopimelate (DAP), an intermediate involved in the bacterial biosynthesis of lysine and meso-diaminopimelic acid, an essential component of bacterial cell walls. The protein is Succinyl-diaminopimelate desuccinylase of Teredinibacter turnerae (strain ATCC 39867 / T7901).